Here is a 554-residue protein sequence, read N- to C-terminus: Glucose-6-phosphate isomerase (554 aa).

Glu-359 functions as the Proton donor in the catalytic mechanism. Catalysis depends on residues His-390 and Lys-518.

Belongs to the GPI family.

It localises to the cytoplasm. The catalysed reaction is alpha-D-glucose 6-phosphate = beta-D-fructose 6-phosphate. Its pathway is carbohydrate biosynthesis; gluconeogenesis. The protein operates within carbohydrate degradation; glycolysis; D-glyceraldehyde 3-phosphate and glycerone phosphate from D-glucose: step 2/4. Functionally, catalyzes the reversible isomerization of glucose-6-phosphate to fructose-6-phosphate. The polypeptide is Glucose-6-phosphate isomerase (Stutzerimonas stutzeri (strain A1501) (Pseudomonas stutzeri)).